The following is a 349-amino-acid chain: Zinc-type alcohol dehydrogenase-like protein PB24D3.08c (349 aa).

The protein belongs to the zinc-containing alcohol dehydrogenase family. Quinone oxidoreductase subfamily.

The protein resides in the cytoplasm. The protein localises to the nucleus. The polypeptide is Zinc-type alcohol dehydrogenase-like protein PB24D3.08c (Schizosaccharomyces pombe (strain 972 / ATCC 24843) (Fission yeast)).